A 239-amino-acid polypeptide reads, in one-letter code: Purine nucleoside phosphorylase DeoD-type (239 aa).

H5 lines the a purine D-ribonucleoside pocket. Phosphate contacts are provided by residues G21, R25, R44, and 88–91 (RVGS). A purine D-ribonucleoside-binding positions include 180–182 (EME) and 204–205 (SD). D205 acts as the Proton donor in catalysis.

It belongs to the PNP/UDP phosphorylase family. Homohexamer; trimer of homodimers.

The enzyme catalyses a purine D-ribonucleoside + phosphate = a purine nucleobase + alpha-D-ribose 1-phosphate. The catalysed reaction is a purine 2'-deoxy-D-ribonucleoside + phosphate = a purine nucleobase + 2-deoxy-alpha-D-ribose 1-phosphate. In terms of biological role, catalyzes the reversible phosphorolytic breakdown of the N-glycosidic bond in the beta-(deoxy)ribonucleoside molecules, with the formation of the corresponding free purine bases and pentose-1-phosphate. This chain is Purine nucleoside phosphorylase DeoD-type, found in Pectobacterium atrosepticum (strain SCRI 1043 / ATCC BAA-672) (Erwinia carotovora subsp. atroseptica).